The sequence spans 32 residues: METLVYTFLLIGTLAVLFAAVFFRDPPRIAKK.

A helical transmembrane segment spans residues 3–23 (TLVYTFLLIGTLAVLFAAVFF).

This sequence belongs to the PsbT family. As to quaternary structure, PSII is composed of 1 copy each of membrane proteins PsbA, PsbB, PsbC, PsbD, PsbE, PsbF, PsbH, PsbI, PsbJ, PsbK, PsbL, PsbM, PsbT, PsbX, PsbY, PsbZ, Psb30/Ycf12, at least 3 peripheral proteins of the oxygen-evolving complex and a large number of cofactors. It forms dimeric complexes.

Its subcellular location is the plastid. It is found in the chloroplast thylakoid membrane. In terms of biological role, found at the monomer-monomer interface of the photosystem II (PS II) dimer, plays a role in assembly and dimerization of PSII. PSII is a light-driven water plastoquinone oxidoreductase, using light energy to abstract electrons from H(2)O, generating a proton gradient subsequently used for ATP formation. The protein is Photosystem II reaction center protein T of Guillardia theta (Cryptophyte).